The primary structure comprises 130 residues: Small ribosomal subunit protein uS9 (130 aa).

It belongs to the universal ribosomal protein uS9 family.

This chain is Small ribosomal subunit protein uS9, found in Salmonella paratyphi C (strain RKS4594).